The chain runs to 858 residues: Ubiquitin carboxyl-terminal hydrolase 5 (858 aa).

Position 2 is an N-acetylalanine (Ala-2). The disordered stretch occupies residues 74–96; the sequence is RRTRRPKEEDPATGTGDPPRKKP. A Glycyl lysine isopeptide (Lys-Gly) (interchain with G-Cter in SUMO) cross-link involves residue Lys-113. Ser-149 and Ser-156 each carry phosphoserine. A UBP-type; degenerate zinc finger spans residues 175-283; it reads QVSKHAFSLK…EHLSHFGIDM (109 aa). An intrachain disulfide couples Cys-195 to Cys-816. Residues Cys-199 and Cys-202 each contribute to the Zn(2+) site. A substrate-binding site is contributed by Trp-209. Cys-219 is a Zn(2+) binding site. 221–224 contacts substrate; it reads RRYF. His-232 provides a ligand contact to Zn(2+). Residues Tyr-259, Tyr-261, and Asp-264 each contribute to the substrate site. Thr-292 is subject to Phosphothreonine. The USP domain maps to 326 to 856; that stretch reads TGIRNLGNSC…LGYIYFYQRV (531 aa). Cys-335 functions as the Nucleophile in the catalytic mechanism. Position 623 is a phosphothreonine (Thr-623). 2 UBA domains span residues 654–695 and 722–762; these read MLDE…VMSH and PPPE…IFSH. Phosphoserine is present on residues Ser-779, Ser-783, and Ser-785. His-818 acts as the Proton acceptor in catalysis.

Belongs to the peptidase C19 family. In terms of assembly, homodimer. Interacts with TRIML1. Ubiquitinated by SMURF1; leading to proteasomal degradation. Post-translationally, SUMOylated at Lys-113; SUMOylation affects the interaction with Cav3.2 channels.

It is found in the cytoplasm. The protein localises to the stress granule. The protein resides in the nucleus. The catalysed reaction is Thiol-dependent hydrolysis of ester, thioester, amide, peptide and isopeptide bonds formed by the C-terminal Gly of ubiquitin (a 76-residue protein attached to proteins as an intracellular targeting signal).. In terms of biological role, deubiquitinating enzyme that participates in a wide range of cellular processes by specifically cleaving isopeptide bonds between ubiquitin and substrate proteins or ubiquitin itself. Affects thereby important cellular signaling pathways such as NF-kappa-B, Wnt/beta-catenin, and cytokine production by regulating ubiquitin-dependent protein degradation. Participates in the activation of the Wnt signaling pathway by promoting FOXM1 deubiquitination and stabilization that induces the recruitment of beta-catenin to Wnt target gene promoter. Regulates the assembly and disassembly of heat-induced stress granules by mediating the hydrolysis of unanchored ubiquitin chains. Promotes lipopolysaccharide-induced apoptosis and inflammatory response by stabilizing the TXNIP protein. Affects T-cell biology by stabilizing the inhibitory receptor on T-cells PDC1. Acts as a negative regulator of autophagy by regulating ULK1 at both protein and mRNA levels. Acts also as a negative regulator of type I interferon production by simultaneously removing both 'Lys-48'-linked unanchored and 'Lys-63'-linked anchored polyubiquitin chains on the transcription factor IRF3. Modulates the stability of DNA mismatch repair protein MLH1 and counteracts the effect of the ubiquitin ligase UBR4. Upon activation by insulin, it gets phosphorylated through mTORC1-mediated phosphorylation to enhance YTHDF1 stability by removing 'Lys-11'-linked polyubiquitination. May also deubiquitinate other substrates such as the calcium channel CACNA1H. The sequence is that of Ubiquitin carboxyl-terminal hydrolase 5 (USP5) from Homo sapiens (Human).